The sequence spans 623 residues: Transketolase (623 aa).

Met-1 carries the post-translational modification N-acetylmethionine. N6-acetyllysine is present on residues Lys-6 and Lys-11. His-37 lines the substrate pocket. 2 residues coordinate thiamine diphosphate: Ser-40 and His-77. Phosphoserine is present on Ser-104. A thiamine diphosphate-binding site is contributed by 123–125; the sequence is GSL. Lys-144 carries the post-translational modification N6-acetyllysine. Residue Asp-155 participates in Mg(2+) binding. Thiamine diphosphate contacts are provided by Gly-156 and Asn-185. Residues Asn-185 and Leu-187 each coordinate Mg(2+). 3 positions are modified to N6-acetyllysine: Lys-204, Lys-232, and Lys-241. Thiamine diphosphate-binding residues include Lys-244 and His-258. His-258 contributes to the substrate binding site. Lys-260 carries the N6-acetyllysine modification. Residue Tyr-275 is modified to Phosphotyrosine. Thr-287 carries the post-translational modification Phosphothreonine. Phosphoserine is present on Ser-295. Arg-318 and Ser-345 together coordinate substrate. The residue at position 345 (Ser-345) is a Phosphoserine. Residue Lys-352 forms a Glycyl lysine isopeptide (Lys-Gly) (interchain with G-Cter in SUMO2) linkage. Glu-366 (proton donor) is an active-site residue. Phe-392 is a binding site for thiamine diphosphate. His-416 and Asp-424 together coordinate substrate. Residue Gln-428 participates in thiamine diphosphate binding. Arg-474 serves as a coordination point for substrate. Lys-538 and Lys-603 each carry N6-acetyllysine.

This sequence belongs to the transketolase family. In terms of assembly, homodimer. Mg(2+) serves as cofactor. Requires Ca(2+) as cofactor. It depends on Mn(2+) as a cofactor. Co(2+) is required as a cofactor. The cofactor is thiamine diphosphate.

The enzyme catalyses D-sedoheptulose 7-phosphate + D-glyceraldehyde 3-phosphate = aldehydo-D-ribose 5-phosphate + D-xylulose 5-phosphate. In terms of biological role, catalyzes the transfer of a two-carbon ketol group from a ketose donor to an aldose acceptor, via a covalent intermediate with the cofactor thiamine pyrophosphate. In Mus musculus (Mouse), this protein is Transketolase (Tkt).